Consider the following 427-residue polypeptide: Diaminobutyrate--2-oxoglutarate transaminase (427 aa).

At K269 the chain carries N6-(pyridoxal phosphate)lysine.

It belongs to the class-III pyridoxal-phosphate-dependent aminotransferase family. Pyridoxal 5'-phosphate is required as a cofactor.

The catalysed reaction is L-2,4-diaminobutanoate + 2-oxoglutarate = L-aspartate 4-semialdehyde + L-glutamate. The protein operates within amine and polyamine biosynthesis; ectoine biosynthesis; L-ectoine from L-aspartate 4-semialdehyde: step 1/3. Catalyzes reversively the conversion of L-aspartate beta-semialdehyde (ASA) to L-2,4-diaminobutyrate (DABA) by transamination with L-glutamate. This Marinococcus halophilus protein is Diaminobutyrate--2-oxoglutarate transaminase (ectB).